Consider the following 206-residue polypeptide: Ion-translocating oxidoreductase complex subunit G (206 aa).

A helical membrane pass occupies residues 9-29; sequence GITLALFAAGSTGLTAVINQM. Residue threonine 174 is modified to FMN phosphoryl threonine.

The protein belongs to the RnfG family. In terms of assembly, the complex is composed of six subunits: RsxA, RsxB, RsxC, RsxD, RsxE and RsxG. The cofactor is FMN.

Its subcellular location is the cell inner membrane. In terms of biological role, part of a membrane-bound complex that couples electron transfer with translocation of ions across the membrane. Required to maintain the reduced state of SoxR. The polypeptide is Ion-translocating oxidoreductase complex subunit G (Salmonella typhimurium (strain LT2 / SGSC1412 / ATCC 700720)).